The primary structure comprises 205 residues: tRNA (pseudouridine(54)-N(1))-methyltransferase (205 aa).

S-adenosyl-L-methionine-binding positions include Leu136, Gly156, 179 to 184, and Cys189; that span reads LSPLEL.

The protein belongs to the methyltransferase superfamily. TrmY family. Homodimer.

Its subcellular location is the cytoplasm. It catalyses the reaction pseudouridine(54) in tRNA + S-adenosyl-L-methionine = N(1)-methylpseudouridine(54) in tRNA + S-adenosyl-L-homocysteine + H(+). Its function is as follows. Specifically catalyzes the N1-methylation of pseudouridine at position 54 (Psi54) in tRNAs. The sequence is that of tRNA (pseudouridine(54)-N(1))-methyltransferase from Methanocaldococcus jannaschii (strain ATCC 43067 / DSM 2661 / JAL-1 / JCM 10045 / NBRC 100440) (Methanococcus jannaschii).